The chain runs to 330 residues: MADIIARLREDGIQKRVIQEGRGALPDFQDGTKATFHYRTLCSDEEGAVLDDSRVRGKPMELIIGKKFKLPVWETIVRTMREGEIAQFCCDXKHVVLYPLVAKSLRNIAAGKDPLEGQRHCCGIAQMHXHSSLGHADLDALQQNPQPLIFDIEMLKVENPGTYQQDPWAMTDEEKAKAVPVIHQEGNRLYREGHVKEAAAKYYDAIACLKNLQMKEQPGSPDWIQLDQQITPLLLNYCQCKLVAEEYYEVLDHCSSILNKYDDNVKAYFKRGKAHAAVWNAQQAQDDFAKVLQLDPAMAPVVSRELRALEARIRQKDEEDKARFRGIFSH.

Serine 43 is subject to Phosphoserine. The 93-residue stretch at 54–146 folds into the PPIase FKBP-type domain; it reads RVRGKPMELI…DLDALQQNPQ (93 aa). 3 TPR repeats span residues 179 to 212, 231 to 264, and 265 to 298; these read VPVIHQEGNRLYREGHVKEAAAKYYDAIACLKNL, TPLLLNYCQCKLVAEEYYEVLDHCSSILNKYDDN, and VKAYFKRGKAHAAVWNAQQAQDDFAKVLQLDPAM.

In terms of assembly, interacts with RET in the pituitary gland; this interaction prevents the formation of the AIP-survivin complex.

The protein localises to the cytoplasm. In terms of biological role, may play a positive role in AHR-mediated (aromatic hydrocarbon receptor) signaling, possibly by influencing its receptivity for ligand and/or its nuclear targeting. This Bos taurus (Bovine) protein is AH receptor-interacting protein (AIP).